Consider the following 223-residue polypeptide: Deoxyribose-phosphate aldolase (223 aa).

Asp92 (proton donor/acceptor) is an active-site residue. Lys154 serves as the catalytic Schiff-base intermediate with acetaldehyde. The active-site Proton donor/acceptor is Lys182.

The protein belongs to the DeoC/FbaB aldolase family. DeoC type 1 subfamily.

Its subcellular location is the cytoplasm. It catalyses the reaction 2-deoxy-D-ribose 5-phosphate = D-glyceraldehyde 3-phosphate + acetaldehyde. It functions in the pathway carbohydrate degradation; 2-deoxy-D-ribose 1-phosphate degradation; D-glyceraldehyde 3-phosphate and acetaldehyde from 2-deoxy-alpha-D-ribose 1-phosphate: step 2/2. Catalyzes a reversible aldol reaction between acetaldehyde and D-glyceraldehyde 3-phosphate to generate 2-deoxy-D-ribose 5-phosphate. In Pasteurella multocida (strain Pm70), this protein is Deoxyribose-phosphate aldolase.